Reading from the N-terminus, the 278-residue chain is Ribosomal RNA small subunit methyltransferase A (278 aa).

Residues Asn-18, Leu-20, Gly-45, Glu-66, Asp-89, and Asn-110 each contribute to the S-adenosyl-L-methionine site.

It belongs to the class I-like SAM-binding methyltransferase superfamily. rRNA adenine N(6)-methyltransferase family. RsmA subfamily.

The protein localises to the cytoplasm. It catalyses the reaction adenosine(1518)/adenosine(1519) in 16S rRNA + 4 S-adenosyl-L-methionine = N(6)-dimethyladenosine(1518)/N(6)-dimethyladenosine(1519) in 16S rRNA + 4 S-adenosyl-L-homocysteine + 4 H(+). Specifically dimethylates two adjacent adenosines (A1518 and A1519) in the loop of a conserved hairpin near the 3'-end of 16S rRNA in the 30S particle. May play a critical role in biogenesis of 30S subunits. This is Ribosomal RNA small subunit methyltransferase A from Cupriavidus pinatubonensis (strain JMP 134 / LMG 1197) (Cupriavidus necator (strain JMP 134)).